We begin with the raw amino-acid sequence, 388 residues long: Protochlorophyllide reductase A, chloroplastic (388 aa).

The N-terminal 74 residues, 1-74 (MALQLLPSTL…SPSGKKTLRQ (74 aa)), are a transit peptide targeting the chloroplast. A compositionally biased stretch (low complexity) spans 48-68 (VATAPSPVTTSPGSTASSPSG). The disordered stretch occupies residues 48-69 (VATAPSPVTTSPGSTASSPSGK).

The protein belongs to the short-chain dehydrogenases/reductases (SDR) family. POR subfamily.

Its subcellular location is the plastid. The protein localises to the chloroplast. It catalyses the reaction chlorophyllide a + NADP(+) = protochlorophyllide a + NADPH + H(+). It participates in porphyrin-containing compound metabolism; chlorophyll biosynthesis. Phototransformation of protochlorophyllide (Pchlide) to chlorophyllide (Chlide). The sequence is that of Protochlorophyllide reductase A, chloroplastic (PORA) from Hordeum vulgare (Barley).